The sequence spans 288 residues: 4-diphosphocytidyl-2-C-methyl-D-erythritol kinase (288 aa).

Lys13 is a catalytic residue. ATP is bound at residue Pro96–Ser106. Asp138 is a catalytic residue.

This sequence belongs to the GHMP kinase family. IspE subfamily.

It carries out the reaction 4-CDP-2-C-methyl-D-erythritol + ATP = 4-CDP-2-C-methyl-D-erythritol 2-phosphate + ADP + H(+). The protein operates within isoprenoid biosynthesis; isopentenyl diphosphate biosynthesis via DXP pathway; isopentenyl diphosphate from 1-deoxy-D-xylulose 5-phosphate: step 3/6. Functionally, catalyzes the phosphorylation of the position 2 hydroxy group of 4-diphosphocytidyl-2C-methyl-D-erythritol. The sequence is that of 4-diphosphocytidyl-2-C-methyl-D-erythritol kinase from Aliivibrio fischeri (strain MJ11) (Vibrio fischeri).